A 151-amino-acid polypeptide reads, in one-letter code: MCDFTEDQTAEFKEAFQLFDRTGDGKILYSQCGDVMRALGQNPTNAEVLKVLGNPKSDEMNVKVLDFEHFLPMLQTVAKNKDQGTYEDYVEGLRVFDKEGNGTVMGAEIRHVLVTLGEKMTEEEVEMLVAGHEDSNGCINYEELLRMVLNG.

Residue cysteine 2 is modified to N-acetylcysteine. The EF-hand 1 domain maps to 7-42; it reads DQTAEFKEAFQLFDRTGDGKILYSQCGDVMRALGQN. Position 57 is a phosphoserine (serine 57). An N6-acetyllysine modification is found at lysine 81. EF-hand domains follow at residues 84 to 119 and 119 to 151; these read GTYE…LGEK and KMTE…VLNG.

As to quaternary structure, myosin is a hexamer of 2 heavy chains and 4 light chains. Interacts with SPATA6.

Its function is as follows. Regulatory light chain of myosin. Does not bind calcium. In Rattus norvegicus (Rat), this protein is Myosin light polypeptide 6 (Myl6).